The sequence spans 298 residues: 1D-myo-inositol 2-acetamido-2-deoxy-alpha-D-glucopyranoside deacetylase (298 aa).

Zn(2+) is bound by residues H14, D17, and H148. Residues 277–298 (RGPAGPDGREHDLFAGLDGPAT) are disordered.

This sequence belongs to the MshB deacetylase family. The cofactor is Zn(2+).

The enzyme catalyses 1D-myo-inositol 2-acetamido-2-deoxy-alpha-D-glucopyranoside + H2O = 1D-myo-inositol 2-amino-2-deoxy-alpha-D-glucopyranoside + acetate. Catalyzes the deacetylation of 1D-myo-inositol 2-acetamido-2-deoxy-alpha-D-glucopyranoside (GlcNAc-Ins) in the mycothiol biosynthesis pathway. This chain is 1D-myo-inositol 2-acetamido-2-deoxy-alpha-D-glucopyranoside deacetylase, found in Nocardia farcinica (strain IFM 10152).